The chain runs to 571 residues: Proline--tRNA ligase (571 aa).

It belongs to the class-II aminoacyl-tRNA synthetase family. ProS type 1 subfamily. Homodimer.

Its subcellular location is the cytoplasm. It carries out the reaction tRNA(Pro) + L-proline + ATP = L-prolyl-tRNA(Pro) + AMP + diphosphate. In terms of biological role, catalyzes the attachment of proline to tRNA(Pro) in a two-step reaction: proline is first activated by ATP to form Pro-AMP and then transferred to the acceptor end of tRNA(Pro). As ProRS can inadvertently accommodate and process non-cognate amino acids such as alanine and cysteine, to avoid such errors it has two additional distinct editing activities against alanine. One activity is designated as 'pretransfer' editing and involves the tRNA(Pro)-independent hydrolysis of activated Ala-AMP. The other activity is designated 'posttransfer' editing and involves deacylation of mischarged Ala-tRNA(Pro). The misacylated Cys-tRNA(Pro) is not edited by ProRS. The protein is Proline--tRNA ligase of Pseudoalteromonas atlantica (strain T6c / ATCC BAA-1087).